The sequence spans 364 residues: Aminomethyltransferase (364 aa).

This sequence belongs to the GcvT family. In terms of assembly, the glycine cleavage system is composed of four proteins: P, T, L and H.

It catalyses the reaction N(6)-[(R)-S(8)-aminomethyldihydrolipoyl]-L-lysyl-[protein] + (6S)-5,6,7,8-tetrahydrofolate = N(6)-[(R)-dihydrolipoyl]-L-lysyl-[protein] + (6R)-5,10-methylene-5,6,7,8-tetrahydrofolate + NH4(+). In terms of biological role, the glycine cleavage system catalyzes the degradation of glycine. The chain is Aminomethyltransferase from Shewanella piezotolerans (strain WP3 / JCM 13877).